A 317-amino-acid polypeptide reads, in one-letter code: NADH-ubiquinone oxidoreductase chain 1 (317 aa).

Helical transmembrane passes span 3–23 (YIELLIMFLSVLLAVAFLTVA), 37–57 (PNAVGYYGILMAIADAAKLLL), 69–89 (LILFVSPMISLISALLCWSVI), 103–123 (GFILTLAISSVGVFGTLLAGW), 141–161 (LISYELVLTTIILLCILIGGT), 173–193 (AIWYGIPLLPLAIIFFIGCVA), 207–227 (SELVSGHMTEYSSSIFVLFFL), 247–267 (GGTGIILGLKANLFAFTYIWV), and 282–302 (LCWMIFLPILFGSAIAVPAYL).

The protein belongs to the complex I subunit 1 family.

The protein localises to the mitochondrion inner membrane. The catalysed reaction is a ubiquinone + NADH + 5 H(+)(in) = a ubiquinol + NAD(+) + 4 H(+)(out). Core subunit of the mitochondrial membrane respiratory chain NADH dehydrogenase (Complex I) that is believed to belong to the minimal assembly required for catalysis. Complex I functions in the transfer of electrons from NADH to the respiratory chain. The immediate electron acceptor for the enzyme is believed to be ubiquinone. In Candida albicans (strain SC5314 / ATCC MYA-2876) (Yeast), this protein is NADH-ubiquinone oxidoreductase chain 1 (NAD1).